A 363-amino-acid chain; its full sequence is Protein-glutamate methylesterase/protein-glutamine glutaminase 2 (363 aa).

The Response regulatory domain occupies 6 to 123; it reads RVLIVDDSAS…AQFLLESKIH (118 aa). D57 bears the 4-aspartylphosphate mark. The region spanning 172-363 is the CheB-type methylesterase domain; the sequence is ARTTESVICI…AMEILRAGNR (192 aa). Catalysis depends on residues S184, H210, and D306.

This sequence belongs to the CheB family. Post-translationally, phosphorylated by CheA. Phosphorylation of the N-terminal regulatory domain activates the methylesterase activity.

The protein resides in the cytoplasm. The catalysed reaction is [protein]-L-glutamate 5-O-methyl ester + H2O = L-glutamyl-[protein] + methanol + H(+). It catalyses the reaction L-glutaminyl-[protein] + H2O = L-glutamyl-[protein] + NH4(+). Involved in chemotaxis. Part of a chemotaxis signal transduction system that modulates chemotaxis in response to various stimuli. Catalyzes the demethylation of specific methylglutamate residues introduced into the chemoreceptors (methyl-accepting chemotaxis proteins or MCP) by CheR. Also mediates the irreversible deamidation of specific glutamine residues to glutamic acid. This chain is Protein-glutamate methylesterase/protein-glutamine glutaminase 2, found in Rhodospirillum rubrum (strain ATCC 11170 / ATH 1.1.1 / DSM 467 / LMG 4362 / NCIMB 8255 / S1).